A 269-amino-acid chain; its full sequence is Tryptophan synthase alpha chain (269 aa).

Residues Glu49 and Asp60 each act as proton acceptor in the active site.

This sequence belongs to the TrpA family. Tetramer of two alpha and two beta chains.

The enzyme catalyses (1S,2R)-1-C-(indol-3-yl)glycerol 3-phosphate + L-serine = D-glyceraldehyde 3-phosphate + L-tryptophan + H2O. The protein operates within amino-acid biosynthesis; L-tryptophan biosynthesis; L-tryptophan from chorismate: step 5/5. In terms of biological role, the alpha subunit is responsible for the aldol cleavage of indoleglycerol phosphate to indole and glyceraldehyde 3-phosphate. This Pseudomonas fluorescens (strain SBW25) protein is Tryptophan synthase alpha chain.